A 92-amino-acid polypeptide reads, in one-letter code: MEKLAAKVLENFDFLKKLLRDRAECGESEITIYDDPVTIVVKRDRIDFFINEEYHGSVGVGFNTLSDEIREEARLWLEGLAGMKFKRYAVRR.

This is an uncharacterized protein from Archaeoglobus fulgidus (strain ATCC 49558 / DSM 4304 / JCM 9628 / NBRC 100126 / VC-16).